The following is a 184-amino-acid chain: Casparian strip membrane protein 3 (184 aa).

The Cytoplasmic portion of the chain corresponds to 1–22; it reads MEGSGEHGETSKGPLSKGVSRG. The helical transmembrane segment at 23–43 threads the bilayer; sequence LCILDLIFRVIAVIGTLASAI. Residues 44 to 72 are Extracellular-facing; it reads AMGTTNQTMPFFTQFVQFKERYSDLPTLT. An N-linked (GlcNAc...) asparagine glycan is attached at Asn49. The helical transmembrane segment at 73–93 threads the bilayer; it reads FFVVANSIASAYLIISLPLSI. At 94 to 105 the chain is on the cytoplasmic side; that stretch reads VHIIRSRAKYSR. The chain crosses the membrane as a helical span at residues 106 to 126; it reads LILIFFDVAMLALVTAAASAG. At 127–159 the chain is on the extracellular side; it reads AAIVYLAHNGNVSANWFAICQQFDSFCERISGS. Asn137 is a glycosylation site (N-linked (GlcNAc...) asparagine). A helical membrane pass occupies residues 160 to 180; that stretch reads LIGSFAAMVVLILLILLSAVA. At 181–184 the chain is on the cytoplasmic side; that stretch reads LARR.

The protein belongs to the Casparian strip membrane proteins (CASP) family. Homodimer and heterodimers.

It is found in the cell membrane. Regulates membrane-cell wall junctions and localized cell wall deposition. Required for establishment of the Casparian strip membrane domain (CSD) and the subsequent formation of Casparian strips, a cell wall modification of the root endodermis that determines an apoplastic barrier between the intraorganismal apoplasm and the extraorganismal apoplasm and prevents lateral diffusion. This chain is Casparian strip membrane protein 3, found in Brachypodium distachyon (Purple false brome).